The following is a 247-amino-acid chain: ATP synthase subunit a (247 aa).

6 consecutive transmembrane segments (helical) span residues 24–44 (IAFTTSSAYMLLAVVLIAAMM), 82–102 (FFPLVFSLFMFIFVSNIVGII), 112–132 (IIVTFSLALLVFLTVIIYGFY), 141–161 (LFVPSGIPAVILPLVVIIEII), 181–201 (GHVTLKVFASFVTMLGALGFV), and 206–226 (ALLPLGLTVALTGLELMVAFL).

This sequence belongs to the ATPase A chain family. In terms of assembly, F-type ATPases have 2 components, CF(1) - the catalytic core - and CF(0) - the membrane proton channel. CF(1) has five subunits: alpha(3), beta(3), gamma(1), delta(1), epsilon(1). CF(0) has four main subunits: a, b, b' and c.

The protein resides in the cell inner membrane. Key component of the proton channel; it plays a direct role in the translocation of protons across the membrane. The sequence is that of ATP synthase subunit a from Bradyrhizobium sp. (strain ORS 278).